Reading from the N-terminus, the 506-residue chain is Apolipoprotein N-acyltransferase (506 aa).

The next 6 helical transmembrane spans lie at 24 to 44 (LALAPFDFWPLVLVSVAMFYL), 58 to 78 (GWCYGFGLYGAGTSWIYVSIH), 85 to 105 (ALLAGLLMLLFIAAIALFFAL), 125 to 145 (LAFAALWLWQEAFRGWFLTGF), 162 to 182 (LAPVGGVWLISFALGLTAALL), and 192 to 212 (KSFLAMGVLLLLAPWVAGLAL). In terms of domain architecture, CN hydrolase spans 230–470 (MQGNIEQSMK…RGVLYGEVVP (241 aa)). The active-site Proton acceptor is the glutamate 269. Lysine 330 is a catalytic residue. Residue cysteine 382 is the Nucleophile of the active site. A helical membrane pass occupies residues 482-502 (SWPLAIVCLLLFGWALLAARI).

It belongs to the CN hydrolase family. Apolipoprotein N-acyltransferase subfamily.

It is found in the cell inner membrane. The catalysed reaction is N-terminal S-1,2-diacyl-sn-glyceryl-L-cysteinyl-[lipoprotein] + a glycerophospholipid = N-acyl-S-1,2-diacyl-sn-glyceryl-L-cysteinyl-[lipoprotein] + a 2-acyl-sn-glycero-3-phospholipid + H(+). It functions in the pathway protein modification; lipoprotein biosynthesis (N-acyl transfer). In terms of biological role, catalyzes the phospholipid dependent N-acylation of the N-terminal cysteine of apolipoprotein, the last step in lipoprotein maturation. This Pseudomonas syringae pv. tomato (strain ATCC BAA-871 / DC3000) protein is Apolipoprotein N-acyltransferase.